The sequence spans 434 residues: MSILTIHARQIFDSRGNPTVEVDLKTSKGLFRAAVPSGASTGVHEALELRDTNSKAYMKKGVLTAVSNVNKIIAPALINKNIPVTNQAAIDKYMIDLDGTENKEKLGANAILGVSLAVCKAGAAEAGLPLYRYIARLAGHEDVIMPVPAFNVINGGSHAGNKLAMQEFMILPTGASSFTEAMQIGTEVYHNLKAVIKREYGLDACNVGDEGGFAPNIQDNMKGLQLLEEAIKIAGYTGKVEIGMDCAASEFHKNGKYDLDFKNPHSAESTWLSPDAMANMYKQMISKFPIVSIEDPFDQDDWETWPKLTSSTNIQIVGDDLTVTNPKRIKQAIASKACNCLLLKVNQIGSLTESIEACKLAQDSGWGVMVSHRSGETEDTFIADLVVGLCTGQIKTGAPCRSDRLAKYNQLLRIEEELGTAAKYAGKNFRHPKV.

Residues histidine 158 and glutamate 167 each coordinate substrate. Glutamate 210 functions as the Proton donor in the catalytic mechanism. Mg(2+)-binding residues include aspartate 245, glutamate 294, and aspartate 319. Glutamate 294 and aspartate 319 together coordinate substrate. Catalysis depends on lysine 344, which acts as the Proton acceptor. Substrate contacts are provided by residues 371 to 374 and lysine 395; that span reads SHRS.

The protein belongs to the enolase family. In terms of assembly, homodimer. Mg(2+) serves as cofactor.

The protein resides in the cytoplasm. The enzyme catalyses (2R)-2-phosphoglycerate = phosphoenolpyruvate + H2O. It participates in carbohydrate degradation; glycolysis; pyruvate from D-glyceraldehyde 3-phosphate: step 4/5. The chain is Enolase (ENO) from Schistosoma mansoni (Blood fluke).